The primary structure comprises 79 residues: Putative membrane protein insertion efficiency factor (79 aa).

It belongs to the UPF0161 family.

The protein resides in the cell inner membrane. Its function is as follows. Could be involved in insertion of integral membrane proteins into the membrane. The sequence is that of Putative membrane protein insertion efficiency factor from Cytophaga hutchinsonii (strain ATCC 33406 / DSM 1761 / CIP 103989 / NBRC 15051 / NCIMB 9469 / D465).